We begin with the raw amino-acid sequence, 399 residues long: Formaldehyde dismutase (399 aa).

C46 provides a ligand contact to Zn(2+). An NAD(+)-binding site is contributed by 47–51 (GSDQH). 6 residues coordinate Zn(2+): H67, C97, C100, C103, C111, and D170. T174 serves as a coordination point for NAD(+). Residue H177 participates in Zn(2+) binding. NAD(+) is bound by residues 197–198 (PV), 218–219 (DQ), R223, V263, H268, P299, 299–301 (PGI), and 336–338 (GMA).

The protein belongs to the zinc-containing alcohol dehydrogenase family. As to quaternary structure, homotetramer. Zn(2+) is required as a cofactor. It depends on NAD(+) as a cofactor. Requires NADH as cofactor.

The enzyme catalyses 2 formaldehyde + H2O = methanol + formate + H(+). With respect to regulation, inhibited by the substrate analog pyrazole but not by NAD analogs such as AMP, ADP, ATP or N-methylnicotinamide chloride. Active against a range of primary alcohols as well as some secondary alcohols. Exhibits higher activity against alcohols with longer carbon chains. This chain is Formaldehyde dismutase, found in Pseudomonas putida (Arthrobacter siderocapsulatus).